A 382-amino-acid chain; its full sequence is Protein delta homolog 2 (382 aa).

The first 26 residues, 1 to 26 (MPSGCRCLNLVCLLCILGATSQPARA), serve as a signal peptide directing secretion. EGF-like domains are found at residues 27–58 (DDCS…LHCE), 62–89 (RMPG…KFCD), 91–129 (DEHI…RGCE), and 131–172 (KAGP…AHCE). The Extracellular portion of the chain corresponds to 27–305 (DDCSSHCDLA…RQESGLGESS (279 aa)). 17 disulfide bridges follow: cysteine 29–cysteine 40, cysteine 33–cysteine 46, cysteine 48–cysteine 57, cysteine 66–cysteine 71, cysteine 79–cysteine 88, cysteine 95–cysteine 107, cysteine 101–cysteine 117, cysteine 119–cysteine 128, cysteine 135–cysteine 148, cysteine 142–cysteine 160, cysteine 162–cysteine 171, cysteine 178–cysteine 189, cysteine 183–cysteine 198, cysteine 200–cysteine 209, cysteine 216–cysteine 227, cysteine 221–cysteine 236, and cysteine 238–cysteine 247. Residue asparagine 157 is glycosylated (N-linked (GlcNAc...) asparagine). In terms of domain architecture, EGF-like 5; calcium-binding spans 174–210 (NVDDCLMRPCANGATCIDGINRFSCLCPEGFAGRFCT). The EGF-like 6; calcium-binding domain occupies 212 to 248 (NLDDCASRPCQRGARCRDRVHDFDCLCPSGYGGKTCE). Residues 306 to 326 (LVALVVFGSLTAALVLATVLL) traverse the membrane as a helical segment. Residues 327–382 (TLRAWRRGICPTGPCCYPAPHYAPARQDQECQVSMLPAGFPLSPDLPPEPGKTTAL) lie on the Cytoplasmic side of the membrane.

As to expression, detected in a number of tissues including lung, brain, adrenal gland, testis, adult liver, placenta, ovary and thymus. Not detected in fetal liver or in adult spleen, muscle and heart.

It localises to the membrane. In terms of biological role, regulates adipogenesis. The polypeptide is Protein delta homolog 2 (Dlk2) (Mus musculus (Mouse)).